The primary structure comprises 159 residues: Late embryogenesis abundant protein 50 (159 aa).

2 SMP domains span residues 30–87 and 96–151; these read TTLT…RNQK and NLGD…YKLN.

Belongs to the LEA type SMP family.

The protein resides in the cytoplasm. Its subcellular location is the nucleus. In terms of biological role, LEA proteins are late embryonic proteins abundant in higher plant seed embryos. The function of those proteins is not known. This Arabidopsis thaliana (Mouse-ear cress) protein is Late embryogenesis abundant protein 50.